Consider the following 1044-residue polypeptide: Pre-mRNA-splicing factor ATP-dependent RNA helicase DEAH1 (1044 aa).

Positions 106–206 (EVVVEKKSSV…TLSKKEKEEA (101 aa)) are disordered. Positions 108 to 121 (VVEKKSSVSESRKS) are enriched in basic and acidic residues. Over residues 122–132 (DKGKKRFRKKS) the composition is skewed to basic residues. Residues serine 135 and serine 138 each carry the phosphoserine modification. Positions 157–166 (EEDDGSESEE) are enriched in acidic residues. Residues 167-206 (ERVRDQKEREELEQHLKDRDTARTRKLTEQTLSKKEKEEA) are compositionally biased toward basic and acidic residues. The Helicase ATP-binding domain occupies 414–577 (LKAVEEHQVL…FDTAPIFSFP (164 aa)). 427–434 (GDTGSGKT) is a binding site for ATP. Residues 524-527 (DEAH) carry the DEAH box motif. The region spanning 600-775 (IVTILTIHVR…SVVLALKSLG (176 aa)) is the Helicase C-terminal domain.

Belongs to the DEAD box helicase family. DEAH subfamily. PRP2 sub-subfamily. In terms of tissue distribution, widely expressed.

It catalyses the reaction ATP + H2O = ADP + phosphate + H(+). Involved in pre-mRNA splicing. This chain is Pre-mRNA-splicing factor ATP-dependent RNA helicase DEAH1, found in Arabidopsis thaliana (Mouse-ear cress).